A 232-amino-acid chain; its full sequence is Orotidine 5'-phosphate decarboxylase (232 aa).

Residues aspartate 11, lysine 33, 60-69 (DLKLYDIPNT), threonine 119, arginine 180, glutamine 189, glycine 209, and arginine 210 each bind substrate. Lysine 62 (proton donor) is an active-site residue.

This sequence belongs to the OMP decarboxylase family. Type 1 subfamily. As to quaternary structure, homodimer.

The enzyme catalyses orotidine 5'-phosphate + H(+) = UMP + CO2. It participates in pyrimidine metabolism; UMP biosynthesis via de novo pathway; UMP from orotate: step 2/2. Functionally, catalyzes the decarboxylation of orotidine 5'-monophosphate (OMP) to uridine 5'-monophosphate (UMP). The protein is Orotidine 5'-phosphate decarboxylase of Wigglesworthia glossinidia brevipalpis.